A 116-amino-acid chain; its full sequence is Immunoglobulin heavy variable 3-66 (116 aa).

The N-terminal stretch at 1–19 (MEFGLSWVFLVAILKGVQC) is a signal peptide. The tract at residues 20–44 (EVQLVESGGGLIQPGGSLRLSCAAS) is framework-1. The Ig-like domain maps to 20–116 (EVQLVESGGG…EDTAVYYCAR (97 aa)). An intrachain disulfide couples Cys-41 to Cys-114. Residues 45–52 (GFTVSSNY) form a complementarity-determining-1 region. Positions 53-69 (MSWVRQAPGKGLEWVSV) are framework-2. Positions 70 to 76 (IYSCGST) are complementarity-determining-2. The tract at residues 77-114 (YYADSVKGRFTISRDNSKNTLYLQMNSLRAEDTAVYYC) is framework-3. The interval 115 to 116 (AR) is complementarity-determining-3.

Immunoglobulins are composed of two identical heavy chains and two identical light chains; disulfide-linked.

It localises to the secreted. The protein resides in the cell membrane. In terms of biological role, v region of the variable domain of immunoglobulin heavy chains that participates in the antigen recognition. Immunoglobulins, also known as antibodies, are membrane-bound or secreted glycoproteins produced by B lymphocytes. In the recognition phase of humoral immunity, the membrane-bound immunoglobulins serve as receptors which, upon binding of a specific antigen, trigger the clonal expansion and differentiation of B lymphocytes into immunoglobulins-secreting plasma cells. Secreted immunoglobulins mediate the effector phase of humoral immunity, which results in the elimination of bound antigens. The antigen binding site is formed by the variable domain of one heavy chain, together with that of its associated light chain. Thus, each immunoglobulin has two antigen binding sites with remarkable affinity for a particular antigen. The variable domains are assembled by a process called V-(D)-J rearrangement and can then be subjected to somatic hypermutations which, after exposure to antigen and selection, allow affinity maturation for a particular antigen. The polypeptide is Immunoglobulin heavy variable 3-66 (Homo sapiens (Human)).